The following is a 273-amino-acid chain: 4-hydroxy-tetrahydrodipicolinate reductase (273 aa).

NAD(+) is bound by residues 8–13 (GALGRM), Asp-35, 103–105 (GTT), and 129–132 (SQNY). His-161 functions as the Proton donor/acceptor in the catalytic mechanism. His-162 serves as a coordination point for (S)-2,3,4,5-tetrahydrodipicolinate. The Proton donor role is filled by Lys-165. 171 to 172 (GT) serves as a coordination point for (S)-2,3,4,5-tetrahydrodipicolinate.

Belongs to the DapB family.

The protein resides in the cytoplasm. It catalyses the reaction (S)-2,3,4,5-tetrahydrodipicolinate + NAD(+) + H2O = (2S,4S)-4-hydroxy-2,3,4,5-tetrahydrodipicolinate + NADH + H(+). The catalysed reaction is (S)-2,3,4,5-tetrahydrodipicolinate + NADP(+) + H2O = (2S,4S)-4-hydroxy-2,3,4,5-tetrahydrodipicolinate + NADPH + H(+). Its pathway is amino-acid biosynthesis; L-lysine biosynthesis via DAP pathway; (S)-tetrahydrodipicolinate from L-aspartate: step 4/4. Its function is as follows. Catalyzes the conversion of 4-hydroxy-tetrahydrodipicolinate (HTPA) to tetrahydrodipicolinate. This is 4-hydroxy-tetrahydrodipicolinate reductase from Methanococcus aeolicus (strain ATCC BAA-1280 / DSM 17508 / OCM 812 / Nankai-3).